The sequence spans 169 residues: Metallopeptidase ImmA (169 aa).

His-75 lines the Zn(2+) pocket. Glu-76 is a catalytic residue. His-79 is a binding site for Zn(2+).

Interacts with ImmR.

Functionally, involved in the regulation of horizontal gene transfer through the integrative and conjugative element ICEBs1. Required for degradation of the ICEBs1 repressor protein ImmR/YdcN. In Bacillus subtilis (strain 168), this protein is Metallopeptidase ImmA (immA).